The chain runs to 549 residues: Peptide transport periplasmic protein SapA (549 aa).

Positions 1 to 21 are cleaved as a signal peptide; the sequence is MRLVLSSLIVIAGLLSSQATA.

It belongs to the bacterial solute-binding protein 5 family.

It localises to the periplasm. Involved in a peptide intake transport system that plays a role in the resistance to antimicrobial peptides. This is Peptide transport periplasmic protein SapA from Salmonella typhimurium (strain LT2 / SGSC1412 / ATCC 700720).